The following is a 157-amino-acid chain: Large ribosomal subunit protein uL15 (157 aa).

The span at 1–13 (MKLNDLRDKDGAT) shows a compositional bias: basic and acidic residues. The tract at residues 1–39 (MKLNDLRDKDGATHSKKRLGRGIGSGSGKTAGRGVKGQK) is disordered. Positions 21 to 35 (RGIGSGSGKTAGRGV) are enriched in gly residues.

Belongs to the universal ribosomal protein uL15 family. In terms of assembly, part of the 50S ribosomal subunit.

In terms of biological role, binds to the 23S rRNA. The protein is Large ribosomal subunit protein uL15 of Mesorhizobium japonicum (strain LMG 29417 / CECT 9101 / MAFF 303099) (Mesorhizobium loti (strain MAFF 303099)).